Consider the following 532-residue polypeptide: Zinc finger protein 350 (532 aa).

The region spanning 8 to 79 (ITLEDVAVDF…EDGIHSGACS (72 aa)) is the KRAB domain. C2H2-type zinc fingers lie at residues 206–228 (HVCS…QVMH), 234–256 (HRCS…QRTH), 262–284 (YECP…QKTH), 290–312 (YICS…QRIH), 318–340 (YICN…QRFH), 346–368 (FVCS…QRIH), 374–396 (FECS…QRTH), and 402–424 (YGCN…KRIH). The span at 427 to 443 (EKQEAAKVENPPAERHS) shows a compositional bias: basic and acidic residues. Positions 427 to 465 (EKQEAAKVENPPAERHSSLHTSDVMQEKNSANGATTQVP) are disordered. Over residues 445-465 (LHTSDVMQEKNSANGATTQVP) the composition is skewed to polar residues.

The protein belongs to the krueppel C2H2-type zinc-finger protein family. In terms of assembly, interacts with BRCA1. Interacts with RNF11. In terms of tissue distribution, widely expressed.

The protein resides in the nucleus. It localises to the nucleus matrix. Functionally, transcriptional repressor. Binds to a specific sequence, 5'-GGGxxxCAGxxxTTT-3', within GADD45 intron 3. In Homo sapiens (Human), this protein is Zinc finger protein 350 (ZNF350).